Here is a 319-residue protein sequence, read N- to C-terminus: Acetyl-coenzyme A carboxylase carboxyl transferase subunit alpha (319 aa).

The region spanning 35–296 (DLEKEIKQLE…KQRLLEQLKE (262 aa)) is the CoA carboxyltransferase C-terminal domain.

The protein belongs to the AccA family. Acetyl-CoA carboxylase is a heterohexamer composed of biotin carboxyl carrier protein (AccB), biotin carboxylase (AccC) and two subunits each of ACCase subunit alpha (AccA) and ACCase subunit beta (AccD).

It localises to the cytoplasm. The catalysed reaction is N(6)-carboxybiotinyl-L-lysyl-[protein] + acetyl-CoA = N(6)-biotinyl-L-lysyl-[protein] + malonyl-CoA. It participates in lipid metabolism; malonyl-CoA biosynthesis; malonyl-CoA from acetyl-CoA: step 1/1. Its function is as follows. Component of the acetyl coenzyme A carboxylase (ACC) complex. First, biotin carboxylase catalyzes the carboxylation of biotin on its carrier protein (BCCP) and then the CO(2) group is transferred by the carboxyltransferase to acetyl-CoA to form malonyl-CoA. The protein is Acetyl-coenzyme A carboxylase carboxyl transferase subunit alpha of Aliivibrio fischeri (strain MJ11) (Vibrio fischeri).